The chain runs to 1217 residues: MFLYNLTLQRATGISFAIHGNFSGTKQQEIVVSRGKILELLRPDPNTGKVHTLLTVEVFGVIRSLMAFRLTGGTKDYIVVGSDSGRIVILEYQPSKNMFEKIHQETFGKSGCRRIVPGQFLAVDPKGRAVMISAIEKQKLVYILNRDAAARLTISSPLEAHKANTLVYHVVGVDVGFENPMFACLEMDYEEADNDPTGEAAANTQQTLTFYELDLGLNHVVRKYSEPLEEHGNFLITVPGGSDGPSGVLICSENYITYKNFGDQPDIRCPIPRRRNDLDDPERGMIFVCSATHKTKSMFFFLAQTEQGDIFKITLETDEDMVTEIRLKYFDTVPVAAAMCVLKTGFLFVASEFGNHYLYQIAHLGDDDEEPEFSSAMPLEEGDTFFFQPRPLKNLVLVDELDSLSPILFCQIADLANEDTPQLYVACGRGPRSSLRVLRHGLEVSEMAVSELPGNPNAVWTVRRHIEDEFDAYIIVSFVNATLVLSIGETVEEVTDSGFLGTTPTLSCSLLGDDALVQVYPDGIRHIRADKRVNEWKTPGKKTIVKCAVNQRQVVIALTGGELVYFEMDPSGQLNEYTERKEMSADVVCMSLANVPPGEQRSRFLAVGLVDNTVRIISLDPSDCLQPLSMQALPAQPESLCIVEMGGTEKQDELGERGSIGFLYLNIGLQNGVLLRTVLDPVTGDLSDTRTRYLGSRPVKLFRVRMQGQEAVLAMSSRSWLSYSYQSRFHLTPLSYETLEFASGFASEQCPEGIVAISTNTLRILALEKLGAVFNQVAFPLQYTPRKFVIHPESNNLIIIETDHNAYTEATKAQRKQQMAEEMVEAAGEDERELAAEMAAAFLNENLPESIFGAPKAGNGQWASVIRVMNPIQGNTLDLVQLEQNEAAFSVAVCRFSNTGEDWYVLVGVAKDLILSPRSVAGGFVYTYKLVNNGEKLEFLHKTPVEEVPAAIAPFQGRVLIGVGKLLRVYDLGKKKLLRKCENKHIANYISGIQTIGHRVIVSDVQESFIWVRYKRNENQLIIFADDTYPRWVTTASLLDYDTVAGADKFGNICVVRLPPNTNDEVDEDPTGNKALWDRGLLNGASQKAEVIMNYHVGETVLSLQKTTLIPGGSESLVYTTLSGGIGILVPFTSHEDHDFFQHVEMHLRSEHPPLCGRDHLSFRSYYFPVKNVIDGDLCEQFNSMEPNKQKNVSEELDRTPPEVSKKLEDIRTRYAF.

Interaction with PHF5A, SF3B1 and SF3B5 stretches follow at residues Glu-105 to Gln-119 and Asn-145 to Tyr-168. Ser-156 bears the Phosphoserine mark. Interaction with SF3B1 and SF3B5 regions lie at residues Asp-193–His-231 and Arg-786–His-804. The interaction with SF3B1 stretch occupies residues Thr-1028–Lys-1049. Residues Thr-1100–Ser-1123 form an interaction with SF3B5 region. Thr-1200 is subject to Phosphothreonine.

This sequence belongs to the RSE1 family. As to quaternary structure, component of the 17S U2 SnRNP complex, a ribonucleoprotein complex that contains small nuclear RNA (snRNA) U2 and a number of specific proteins. Part of the SF3B subcomplex of the 17S U2 SnRNP complex. SF3B associates with the splicing subcomplex SF3A and a 12S RNA unit to form the U2 small nuclear ribonucleoproteins complex (U2 snRNP). Within the SF3B subcomplex, interacts directly with SF3B1 (via HEAT domain), SF3B5 and PHF5A. Identified in the spliceosome A complex; remains associated with the spliceosome throughout the splicing process. Component of the spliceosome B complex. Identified in the spliceosome C complex. Identified in the spliceosome E complex. Component of the minor (U12-type spliceosome) spliceosome. Within this complex, interacts with SCNM1. Associates with the STAGA transcription coactivator-HAT complex. Interacts with SUPT3H. Interacts with TAF3.

It is found in the nucleus. Functionally, component of the 17S U2 SnRNP complex of the spliceosome, a large ribonucleoprotein complex that removes introns from transcribed pre-mRNAs. The 17S U2 SnRNP complex (1) directly participates in early spliceosome assembly and (2) mediates recognition of the intron branch site during pre-mRNA splicing by promoting the selection of the pre-mRNA branch-site adenosine, the nucleophile for the first step of splicing. Within the 17S U2 SnRNP complex, SF3B3 is part of the SF3B subcomplex, which is required for 'A' complex assembly formed by the stable binding of U2 snRNP to the branchpoint sequence in pre-mRNA. Sequence independent binding of SF3A and SF3B subcomplexes upstream of the branch site is essential, it may anchor U2 snRNP to the pre-mRNA. May also be involved in the assembly of the 'E' complex. Also acts as a component of the minor spliceosome, which is involved in the splicing of U12-type introns in pre-mRNAs. This is Splicing factor 3B subunit 3 (Sf3b3) from Mus musculus (Mouse).